The chain runs to 238 residues: Ribonuclease PH (238 aa).

Residues R86 and 124 to 126 (GTR) each bind phosphate.

The protein belongs to the RNase PH family. Homohexameric ring arranged as a trimer of dimers.

The enzyme catalyses tRNA(n+1) + phosphate = tRNA(n) + a ribonucleoside 5'-diphosphate. In terms of biological role, phosphorolytic 3'-5' exoribonuclease that plays an important role in tRNA 3'-end maturation. Removes nucleotide residues following the 3'-CCA terminus of tRNAs; can also add nucleotides to the ends of RNA molecules by using nucleoside diphosphates as substrates, but this may not be physiologically important. Probably plays a role in initiation of 16S rRNA degradation (leading to ribosome degradation) during starvation. The protein is Ribonuclease PH of Actinobacillus succinogenes (strain ATCC 55618 / DSM 22257 / CCUG 43843 / 130Z).